Consider the following 472-residue polypeptide: Coenzyme F(430) synthetase (472 aa).

119–125 (GVKAKTS) serves as a coordination point for ATP.

The protein belongs to the MurCDEF family.

It catalyses the reaction 15,17(3)-seco-F430-17(3)-acid + ATP = coenzyme F430 + ADP + phosphate. Functionally, involved in the biosynthesis of the unique nickel-containing tetrapyrrole coenzyme F430, the prosthetic group of methyl-coenzyme M reductase (MCR), which plays a key role in methanogenesis and anaerobic methane oxidation. Catalyzes the activation the g-propionate side chain of 15,17(3)-seco-F430-17(3)-acid (seco-F430) for intramolecular C-C bond formation to yield the carbocyclic F ring of coenzyme F430. The protein is Coenzyme F(430) synthetase of Methanosarcina acetivorans (strain ATCC 35395 / DSM 2834 / JCM 12185 / C2A).